Consider the following 352-residue polypeptide: Photosystem II D2 protein (352 aa).

N-acetylthreonine is present on Thr2. Thr2 is subject to Phosphothreonine. The chain crosses the membrane as a helical span at residues 40 to 60 (CAYMALGGWLTGTTFVTSWYT). His117 is a binding site for chlorophyll a. Residues 124–140 (GFMLRQFEIAQSLKLRP) form a helical membrane-spanning segment. 2 residues coordinate pheophytin a: Gln129 and Asn142. The helical transmembrane segment at 152–165 (VFVSVFLIYPLGQA) threads the bilayer. Residue His197 participates in chlorophyll a binding. A helical transmembrane segment spans residues 207 to 227 (AALLCAIHGATVENTLFEDGD). Positions 214 and 261 each coordinate a plastoquinone. His214 serves as a coordination point for Fe cation. His268 contributes to the Fe cation binding site. A helical membrane pass occupies residues 278 to 294 (GLWMSAIGVVGLALNLR).

Belongs to the reaction center PufL/M/PsbA/D family. In terms of assembly, PSII is composed of 1 copy each of membrane proteins PsbA, PsbB, PsbC, PsbD, PsbE, PsbF, PsbH, PsbI, PsbJ, PsbK, PsbL, PsbM, PsbT, PsbX, PsbY, PsbZ, Psb30/Ycf12, at least 3 peripheral proteins of the oxygen-evolving complex and a large number of cofactors. It forms dimeric complexes. The D1/D2 heterodimer binds P680, chlorophylls that are the primary electron donor of PSII, and subsequent electron acceptors. It shares a non-heme iron and each subunit binds pheophytin, quinone, additional chlorophylls, carotenoids and lipids. There is also a Cl(-1) ion associated with D1 and D2, which is required for oxygen evolution. The PSII complex binds additional chlorophylls, carotenoids and specific lipids. serves as cofactor.

It localises to the plastid. The protein resides in the chloroplast thylakoid membrane. The enzyme catalyses 2 a plastoquinone + 4 hnu + 2 H2O = 2 a plastoquinol + O2. In terms of biological role, photosystem II (PSII) is a light-driven water:plastoquinone oxidoreductase that uses light energy to abstract electrons from H(2)O, generating O(2) and a proton gradient subsequently used for ATP formation. It consists of a core antenna complex that captures photons, and an electron transfer chain that converts photonic excitation into a charge separation. The D1/D2 (PsbA/PsbD) reaction center heterodimer binds P680, the primary electron donor of PSII as well as several subsequent electron acceptors. D2 is needed for assembly of a stable PSII complex. This is Photosystem II D2 protein from Stigeoclonium helveticum (Green alga).